The chain runs to 295 residues: MAVSHRLLRPATTTIKNTFSSLFIRSLSSSSSGSSLDPKIDLEEAAAQLGKSSSTSTSPYKGRNFHWVFLGCPGVGKGTYASRLSSLLGVPHIATGDLVREELSSSGLLSSQLKELVNHGKLVPDEFIISLLSKRLQAGKDKGESGYILDGFPRTVTQAEILEGVTNIDLVINLKLREEALLAKCLGRRICSECGGNYNVACIDIKGDDDTPRMYMPPLLPPPNCESKLISRADDTEEVVKERLRIYNKMTQPVEEFYKKRGKLLEFELPGGIPESWARLLRALHLEDDKQSAIA.

A chloroplast-targeting transit peptide spans 1 to 46 (MAVSHRLLRPATTTIKNTFSSLFIRSLSSSSSGSSLDPKIDLEEAA). 74-79 (GVGKGT) lines the ATP pocket. The tract at residues 94–123 (ATGDLVREELSSSGLLSSQLKELVNHGKLV) is NMP. AMP-binding positions include Thr95, Arg100, 121–123 (KLV), 151–154 (GFPR), and Gln158. The LID stretch occupies residues 187-235 (GRRICSECGGNYNVACIDIKGDDDTPRMYMPPLLPPPNCESKLISRADD). Arg188 is a binding site for ATP. Arg243 contributes to the AMP binding site. Gly271 contributes to the ATP binding site.

It belongs to the adenylate kinase family. In terms of assembly, monomer.

It localises to the plastid. The protein resides in the chloroplast. The catalysed reaction is AMP + ATP = 2 ADP. Its function is as follows. Catalyzes the reversible transfer of the terminal phosphate group between ATP and AMP. Plays an important role in cellular energy homeostasis and in adenine nucleotide metabolism. This is Probable adenylate kinase 6, chloroplastic from Arabidopsis thaliana (Mouse-ear cress).